The primary structure comprises 185 residues: Ribosome-recycling factor (185 aa).

Belongs to the RRF family.

The protein resides in the cytoplasm. In terms of biological role, responsible for the release of ribosomes from messenger RNA at the termination of protein biosynthesis. May increase the efficiency of translation by recycling ribosomes from one round of translation to another. The sequence is that of Ribosome-recycling factor from Vesicomyosocius okutanii subsp. Calyptogena okutanii (strain HA).